Reading from the N-terminus, the 183-residue chain is Protein CT_584 (183 aa).

The protein belongs to the chlamydial CPn_0803/CT_584/TC_0873 family.

The protein is Protein CT_584 of Chlamydia trachomatis serovar D (strain ATCC VR-885 / DSM 19411 / UW-3/Cx).